We begin with the raw amino-acid sequence, 180 residues long: Interleukin-1-binding protein (180 aa).

Residues 1-20 form the signal peptide; the sequence is MSILPVIFLPIFFYSPFVQT. N-linked (GlcNAc...) asparagine; by host glycans are attached at residues N80, N103, and N113.

It belongs to the interleukin-1 receptor family. In terms of assembly, interacts with mouse Il1b.

It localises to the secreted. May reduce the host inflammatory response by interacting with inteleukin-1 beta (Il1b) and thus decreasing the association between IL1B and its cellular receptor. The protein is Interleukin-1-binding protein (OPG201) of Monkeypox virus.